The sequence spans 123 residues: MIQEQTMLNVADNSGARRVMCIKVLGGSHRRYADVGDIIKITIKEAIPRGKVKKGDVLKAVVVRTKKGVRRPDGSVIRFDSNACVLLNNNSEQVIGTRIFGPVTRELRNEKFMKIISLAPEVL.

This sequence belongs to the universal ribosomal protein uL14 family. In terms of assembly, part of the 50S ribosomal subunit. Forms a cluster with proteins L3 and L19. In the 70S ribosome, L14 and L19 interact and together make contacts with the 16S rRNA in bridges B5 and B8.

Binds to 23S rRNA. Forms part of two intersubunit bridges in the 70S ribosome. This chain is Large ribosomal subunit protein uL14, found in Proteus mirabilis (strain HI4320).